The sequence spans 307 residues: Small ribosomal subunit protein uS5m (307 aa).

The N-terminal 13 residues, 1–13 (MFKRQLSTSVRYL), are a transit peptide targeting the mitochondrion. One can recognise an S5 DRBM domain in the interval 144–208 (LTMKPLVMKR…WDAVRNLKEI (65 aa)).

Belongs to the universal ribosomal protein uS5 family. In terms of assembly, component of the mitochondrial small ribosomal subunit (mt-SSU). Mature yeast 74S mitochondrial ribosomes consist of a small (37S) and a large (54S) subunit. The 37S small subunit contains a 15S ribosomal RNA (15S mt-rRNA) and 34 different proteins. The 54S large subunit contains a 21S rRNA (21S mt-rRNA) and 46 different proteins. uS3m, uS4m and uS5m form the narrow entry site of the mRNA channel.

Its subcellular location is the mitochondrion. Functionally, component of the mitochondrial ribosome (mitoribosome), a dedicated translation machinery responsible for the synthesis of mitochondrial genome-encoded proteins, including at least some of the essential transmembrane subunits of the mitochondrial respiratory chain. The mitoribosomes are attached to the mitochondrial inner membrane and translation products are cotranslationally integrated into the membrane. The protein is Small ribosomal subunit protein uS5m (MRPS5) of Saccharomyces cerevisiae (strain ATCC 204508 / S288c) (Baker's yeast).